A 160-amino-acid chain; its full sequence is Serine-protein kinase RsbW (160 aa).

Belongs to the anti-sigma-factor family.

It catalyses the reaction L-seryl-[protein] + ATP = O-phospho-L-seryl-[protein] + ADP + H(+). The catalysed reaction is L-threonyl-[protein] + ATP = O-phospho-L-threonyl-[protein] + ADP + H(+). In terms of biological role, negative regulator of sigma-B activity. Phosphorylates and inactivates its specific antagonist protein, RsbV. Upon phosphorylation of RsbV, RsbW is released and binds to sigma-B, thereby blocking its ability to form an RNA polymerase holoenzyme (E-sigma-B). The protein is Serine-protein kinase RsbW of Bacillus mycoides (strain KBAB4) (Bacillus weihenstephanensis).